The following is a 114-amino-acid chain: Probable 4-amino-4-deoxy-L-arabinose-phosphoundecaprenol flippase subunit ArnE (114 aa).

Helical transmembrane passes span 38–58, 64–84, and 94–114; these read LTLR…LLWL, LPLS…TLAA, and LRHW…SWHL. The EamA domain maps to 43 to 112; that stretch reads LAIAVVSLGL…IMFGILLMSW (70 aa).

It belongs to the ArnE family. As to quaternary structure, heterodimer of ArnE and ArnF.

Its subcellular location is the cell inner membrane. It participates in bacterial outer membrane biogenesis; lipopolysaccharide biosynthesis. Translocates 4-amino-4-deoxy-L-arabinose-phosphoundecaprenol (alpha-L-Ara4N-phosphoundecaprenol) from the cytoplasmic to the periplasmic side of the inner membrane. This Yersinia pseudotuberculosis serotype O:3 (strain YPIII) protein is Probable 4-amino-4-deoxy-L-arabinose-phosphoundecaprenol flippase subunit ArnE.